A 252-amino-acid polypeptide reads, in one-letter code: Probable transcriptional regulatory protein Bcav_1989 (252 aa).

It belongs to the TACO1 family.

It is found in the cytoplasm. This Beutenbergia cavernae (strain ATCC BAA-8 / DSM 12333 / CCUG 43141 / JCM 11478 / NBRC 16432 / NCIMB 13614 / HKI 0122) protein is Probable transcriptional regulatory protein Bcav_1989.